The chain runs to 315 residues: Ribosomal RNA small subunit methyltransferase H (315 aa).

S-adenosyl-L-methionine contacts are provided by residues 35-37, Asp55, Phe79, Asp101, and Gln108; that span reads GGH.

This sequence belongs to the methyltransferase superfamily. RsmH family.

The protein localises to the cytoplasm. The enzyme catalyses cytidine(1402) in 16S rRNA + S-adenosyl-L-methionine = N(4)-methylcytidine(1402) in 16S rRNA + S-adenosyl-L-homocysteine + H(+). Functionally, specifically methylates the N4 position of cytidine in position 1402 (C1402) of 16S rRNA. The polypeptide is Ribosomal RNA small subunit methyltransferase H (Photobacterium profundum (strain SS9)).